Here is a 459-residue protein sequence, read N- to C-terminus: Cysteine--tRNA ligase (459 aa).

Residue C27 participates in Zn(2+) binding. The short motif at 29 to 39 (PTVYDDAHLGH) is the 'HIGH' region element. 3 residues coordinate Zn(2+): C202, H231, and E235. The 'KMSKS' region signature appears at 263-267 (KMSKS). Residue K266 coordinates ATP.

Belongs to the class-I aminoacyl-tRNA synthetase family. As to quaternary structure, monomer. It depends on Zn(2+) as a cofactor.

The protein localises to the cytoplasm. The enzyme catalyses tRNA(Cys) + L-cysteine + ATP = L-cysteinyl-tRNA(Cys) + AMP + diphosphate. The sequence is that of Cysteine--tRNA ligase from Campylobacter fetus subsp. fetus (strain 82-40).